Reading from the N-terminus, the 172-residue chain is Bifunctional protein PyrR (172 aa).

The short motif at 90-102 is the PRPP-binding element; that stretch reads LVLVDDVLMSGRT.

The protein belongs to the purine/pyrimidine phosphoribosyltransferase family. PyrR subfamily.

It catalyses the reaction UMP + diphosphate = 5-phospho-alpha-D-ribose 1-diphosphate + uracil. Regulates the transcription of the pyrimidine nucleotide (pyr) operon in response to exogenous pyrimidines. In terms of biological role, also displays a weak uracil phosphoribosyltransferase activity which is not physiologically significant. This is Bifunctional protein PyrR from Pseudomonas putida (strain GB-1).